Reading from the N-terminus, the 68-residue chain is Amphipathic peptide OcyC1 (68 aa).

The first 23 residues, 1–23 (MKAQLCILLIALVLFQTFSQSDA), serve as a signal peptide directing secretion. F36 carries the post-translational modification Phenylalanine amide. A propeptide spanning residues 38–68 (RRGLNDLDDLDELFDGEISQADVDFLNELMR) is cleaved from the precursor.

This sequence belongs to the non-disulfide-bridged peptide (NDBP) superfamily. Short antimicrobial peptide (group 4) family. Expressed by the venom gland.

It localises to the secreted. Its subcellular location is the target cell membrane. Its function is as follows. Antimicrobial peptide. Inhibits the growth of Gram-positive and Gram-negative bacteria. Shows antifungal activity with MIC values ranging from 12.5 to 25 uM. Also shows an inhibitory activity on C.albicans biofilms at high concentrations. Shows low cytotoxic activity and has weak hemolytic activity. The chain is Amphipathic peptide OcyC1 from Opisthacanthus cayaporum (South American scorpion).